We begin with the raw amino-acid sequence, 186 residues long: Potassium-transporting ATPase KdpC subunit (186 aa).

A helical transmembrane segment spans residues 10 to 30 (LTIITMVLCGFLFPLAITLIG).

Belongs to the KdpC family. In terms of assembly, the system is composed of three essential subunits: KdpA, KdpB and KdpC.

The protein resides in the cell membrane. Its function is as follows. Part of the high-affinity ATP-driven potassium transport (or Kdp) system, which catalyzes the hydrolysis of ATP coupled with the electrogenic transport of potassium into the cytoplasm. This subunit acts as a catalytic chaperone that increases the ATP-binding affinity of the ATP-hydrolyzing subunit KdpB by the formation of a transient KdpB/KdpC/ATP ternary complex. The protein is Potassium-transporting ATPase KdpC subunit of Staphylococcus aureus (strain COL).